Reading from the N-terminus, the 130-residue chain is Guanyl-specific ribonuclease T1 (130 aa).

The signal sequence occupies residues 1 to 26 (MMYSKLLTLTTLLLPTALALPSLVER). 2 cysteine pairs are disulfide-bonded: Cys28–Cys36 and Cys32–Cys129. His66 is an active-site residue. The Proton acceptor role is filled by Glu84. His118 functions as the Proton donor in the catalytic mechanism.

The protein belongs to the ribonuclease N1/T1 family. Monomer.

The catalysed reaction is [RNA] containing guanosine + H2O = an [RNA fragment]-3'-guanosine-3'-phosphate + a 5'-hydroxy-ribonucleotide-3'-[RNA fragment].. This chain is Guanyl-specific ribonuclease T1 (rntA), found in Aspergillus oryzae (strain ATCC 42149 / RIB 40) (Yellow koji mold).